The following is a 344-amino-acid chain: UDP-glycosyltransferase 73C4 (344 aa).

UDP-alpha-D-glucose contacts are provided by residues Ser145, 202–203 (WA), 220–228 (HCGWNSSLE), and 242–245 (FAEQ).

It belongs to the UDP-glycosyltransferase family. In terms of tissue distribution, expressed in flowers and fruits.

It is found in the cytoplasm. It localises to the nucleus. Its function is as follows. Probable glucosyltransferase that cannot glycosylate abscisic acid (ABA) and auxin (IAA). This chain is UDP-glycosyltransferase 73C4, found in Solanum lycopersicum (Tomato).